A 120-amino-acid polypeptide reads, in one-letter code: Non-specific lipid-transfer protein 1 (120 aa).

The N-terminal stretch at 1–25 is a signal peptide; the sequence is MARSMKLACVALVICMVVIAPMAEA. 4 cysteine pairs are disulfide-bonded: Cys29–Cys78, Cys39–Cys55, Cys56–Cys101, and Cys76–Cys115. A propeptide is located at residue Phe120.

The protein belongs to the plant LTP family. Expressed in roots, stem, leaves and tendrils of the mature plant.

Functionally, plant non-specific lipid-transfer proteins transfer phospholipids as well as galactolipids across membranes. May play a role in wax or cutin deposition in the cell walls of expanding epidermal cells and certain secretory tissues. Binds saturated and unsaturated lipids, jasmonic acid and lysolipids. Has antifungal activity against A.niger VKM F-2259 (IC(50)=40 uM), F.oxysporum TCXA-4 (IC(50)=20-40), F.solani VKM F-142 (IC(50)=20-40 uM) and N.crassa VKM F-184 (IC(50)=40 uM). Has weak antibacterial activity against A.tumefaciens A281, C.michiganensis VKM Ac-1144 and P.syringae VKM B-1546. This Pisum sativum (Garden pea) protein is Non-specific lipid-transfer protein 1.